Reading from the N-terminus, the 198-residue chain is COMM domain-containing protein 9 (198 aa).

A2 is modified (N-acetylalanine). Residues 122-196 (RLVDLDWRVD…RIRDQLSAVA (75 aa)) enclose the COMM domain.

Belongs to the COMM domain-containing protein 9 family. Component of the commander complex consisting of the CCC subcomplex and the retriever subcomplex. Component of the CCC (COMMD/CCDC22/CCDC93) subcomplex consisting of COMMD1, COMMD2, COMMD3, COMMD4, COMMD5, COMMD6, COMMD7, COMMD8, COMMD9, COMMD10, CCDC22 and CCDC93; within the complex forms a heterodimer with COMMD7. Interacts with RELB and NFKB1/p105. Interacts with CCDC22, CCDC93, SCNN1B, CUL1.

It localises to the nucleus. The protein resides in the cytoplasmic vesicle. Functionally, scaffold protein in the commander complex that is essential for endosomal recycling of transmembrane cargos; the commander complex is composed of the CCC subcomplex and the retriever subcomplex. May modulate activity of cullin-RING E3 ubiquitin ligase (CRL) complexes. May down-regulate activation of NF-kappa-B. Modulates Na(+) transport in epithelial cells by regulation of apical cell surface expression of amiloride-sensitive sodium channel (ENaC) subunits. The chain is COMM domain-containing protein 9 (COMMD9) from Bos taurus (Bovine).